The following is a 73-amino-acid chain: Methionyl-tRNA formyltransferase (73 aa).

It belongs to the Fmt family.

The enzyme catalyses L-methionyl-tRNA(fMet) + (6R)-10-formyltetrahydrofolate = N-formyl-L-methionyl-tRNA(fMet) + (6S)-5,6,7,8-tetrahydrofolate + H(+). In terms of biological role, attaches a formyl group to the free amino group of methionyl-tRNA(fMet). The formyl group appears to play a dual role in the initiator identity of N-formylmethionyl-tRNA by promoting its recognition by IF2 and preventing the misappropriation of this tRNA by the elongation apparatus. The chain is Methionyl-tRNA formyltransferase (fmt) from Rickettsia rickettsii.